The sequence spans 361 residues: Peptide chain release factor 1 (361 aa).

Q233 carries the N5-methylglutamine modification. Residues 280-293 (ERRKKEQERADSRR) are compositionally biased toward basic and acidic residues. The tract at residues 280 to 307 (ERRKKEQERADSRRGQVGSGDRSERIRT) is disordered.

Belongs to the prokaryotic/mitochondrial release factor family. In terms of processing, methylated by PrmC. Methylation increases the termination efficiency of RF1.

The protein resides in the cytoplasm. Functionally, peptide chain release factor 1 directs the termination of translation in response to the peptide chain termination codons UAG and UAA. In Rickettsia massiliae (strain Mtu5), this protein is Peptide chain release factor 1.